A 62-amino-acid chain; its full sequence is Small ribosomal subunit protein bS21C (62 aa).

A disordered region spans residues 43-62; that stretch reads EKSKRKKLALHKQSKRRFRT. The segment covering 45–62 has biased composition (basic residues); that stretch reads SKRKKLALHKQSKRRFRT.

The protein belongs to the bacterial ribosomal protein bS21 family.

The chain is Small ribosomal subunit protein bS21C from Trichormus variabilis (strain ATCC 29413 / PCC 7937) (Anabaena variabilis).